The sequence spans 357 residues: Aspartate carbamoyltransferase catalytic subunit (357 aa).

Residues 1-15 are compositionally biased toward polar residues; the sequence is MSNSIDSQSLPTVSP. The disordered stretch occupies residues 1–21; the sequence is MSNSIDSQSLPTVSPTDYARF. Residues arginine 97 and threonine 98 each contribute to the carbamoyl phosphate site. L-aspartate is bound at residue lysine 125. Positions 147, 177, and 180 each coordinate carbamoyl phosphate. Residues arginine 211 and arginine 266 each coordinate L-aspartate. Glycine 307 and proline 308 together coordinate carbamoyl phosphate.

This sequence belongs to the aspartate/ornithine carbamoyltransferase superfamily. ATCase family. In terms of assembly, heterododecamer (2C3:3R2) of six catalytic PyrB chains organized as two trimers (C3), and six regulatory PyrI chains organized as three dimers (R2).

It catalyses the reaction carbamoyl phosphate + L-aspartate = N-carbamoyl-L-aspartate + phosphate + H(+). The protein operates within pyrimidine metabolism; UMP biosynthesis via de novo pathway; (S)-dihydroorotate from bicarbonate: step 2/3. Functionally, catalyzes the condensation of carbamoyl phosphate and aspartate to form carbamoyl aspartate and inorganic phosphate, the committed step in the de novo pyrimidine nucleotide biosynthesis pathway. The protein is Aspartate carbamoyltransferase catalytic subunit of Psychrobacter cryohalolentis (strain ATCC BAA-1226 / DSM 17306 / VKM B-2378 / K5).